A 704-amino-acid chain; its full sequence is Elongation factor G (704 aa).

Residues 8–290 (EKYRNIGICA…GVVRYLPAPN (283 aa)) form the tr-type G domain. Residues 17–24 (AHVDAGKT), 88–92 (DTPGH), and 142–145 (NKMD) each bind GTP.

The protein belongs to the TRAFAC class translation factor GTPase superfamily. Classic translation factor GTPase family. EF-G/EF-2 subfamily.

It localises to the cytoplasm. Catalyzes the GTP-dependent ribosomal translocation step during translation elongation. During this step, the ribosome changes from the pre-translocational (PRE) to the post-translocational (POST) state as the newly formed A-site-bound peptidyl-tRNA and P-site-bound deacylated tRNA move to the P and E sites, respectively. Catalyzes the coordinated movement of the two tRNA molecules, the mRNA and conformational changes in the ribosome. The protein is Elongation factor G of Francisella tularensis subsp. tularensis (strain FSC 198).